The chain runs to 291 residues: Neugrin (291 aa).

The signal sequence occupies residues 1-15 (MAVTLSLLLGGRVCA). 2 disordered regions span residues 26-48 (GVAG…PEER) and 155-270 (GSGN…DNFS). Position 41 is a phosphoserine (Ser41). Residues Asn158 and Asn186 are each glycosylated (N-linked (GlcNAc...) asparagine). Residues 236-246 (KYSSDSESPRG) are compositionally biased toward polar residues. Asn268 is a glycosylation site (N-linked (GlcNAc...) asparagine).

Belongs to the neugrin family. In terms of assembly, forms a regulatory protein-RNA complex, consisting of RCC1L, NGRN, RPUSD3, RPUSD4, TRUB2, FASTKD2 and 16S mt-rRNA. Interacts with 16S mt-rRNA; this interaction is direct. As to expression, expressed at high levels in heart, brain and skeletal muscle. In brain, mainly expressed in neurons rather than glial cells.

Its subcellular location is the nucleus. It is found in the secreted. The protein localises to the mitochondrion membrane. In terms of biological role, plays an essential role in mitochondrial ribosome biogenesis. As a component of a functional protein-RNA module, consisting of RCC1L, NGRN, RPUSD3, RPUSD4, TRUB2, FASTKD2 and 16S mitochondrial ribosomal RNA (16S mt-rRNA), controls 16S mt-rRNA abundance and is required for intra-mitochondrial translation of core subunits of the oxidative phosphorylation system. The polypeptide is Neugrin (Homo sapiens (Human)).